An 864-amino-acid chain; its full sequence is MNQEVKQSEVNLEQHTPMMQQYLRIKAQHPNELVFYRMGDFYELFYEDARKAAKLLDVTLTARGKSNGEPIPMAGVPYHAAENYLAKLVKLGVSVAICEQIGDPATTKGPVERKVMRVVTPGTVSDEALLDEHRDNWLVAISAHESQFGIACLDMGSGRFSVFEIEGEDALISEIERLRPAEILAPDLLTLPPGVRNKAGYRGRPEWEFDIESGLRSLCAHFATKDLDGFGCRGLTVALGAAGCLYAYAKETQRTELSHIASLVVENPDNTVSLDAATRRNLELDINLNGSEENTLFSVLNTTATAMGGRLLRRWINTPLRDLHTLHSRQSAIAALLENYRFEQVQQELKHIGDLERILGRIALRSARPRDLTRLLNSLAIYPQLQPLLKSAECETLATLASEINEFPGLVQELDKALVENPPVVIREGGVIAEGYDEELDELRGISTNAGEFLVKLETQERERTGLNTLKVGYNRVHGYFIEISKSQAEKAPAEYIRRQTLKNAERFITPELKTFEDKALSAKSRALSREKALYEQLIEKLNEHLRELQISAVAVAELDVLNTFAERAHALKLVKPEFRGEAGIEIEKGRHPVVEQVLTDPFIPNDLTLNAQQRMLIITGPNMGGKSTYMRQTALIVLLAQVGSYVPAEACRLGLVDRIFTRIGSSDDLAGGRSTFMVEMTETANILNNATSDSLVLMDEIGRGTSTYDGLSLAWACVEHLAEKLKSFTLFATHYFEITALPAQLPTVKNVHLDATEYQDNIVFLHNIQAGPASKSYGLQVAKLAGIPGAVLRQAKDVLHKLETGKPESPAPVASRSSKPSMQADMFAEPQPSKVEKRLATVIPDDLSPRQALELVYELKKLI.

ATP is bound at residue 621-628 (GPNMGGKS). The interval 804-833 (ETGKPESPAPVASRSSKPSMQADMFAEPQP) is disordered.

Belongs to the DNA mismatch repair MutS family.

In terms of biological role, this protein is involved in the repair of mismatches in DNA. It is possible that it carries out the mismatch recognition step. This protein has a weak ATPase activity. The sequence is that of DNA mismatch repair protein MutS from Teredinibacter turnerae (strain ATCC 39867 / T7901).